Reading from the N-terminus, the 432-residue chain is Probable protein phosphatase 2C 33 (432 aa).

The 272-residue stretch at 27–298 (GGGSERPLVR…DDTTCVVVDI (272 aa)) folds into the PPM-type phosphatase domain. Aspartate 74, glycine 75, aspartate 250, and aspartate 289 together coordinate Mn(2+).

The protein belongs to the PP2C family. The cofactor is Mg(2+). Requires Mn(2+) as cofactor.

The enzyme catalyses O-phospho-L-seryl-[protein] + H2O = L-seryl-[protein] + phosphate. It carries out the reaction O-phospho-L-threonyl-[protein] + H2O = L-threonyl-[protein] + phosphate. This chain is Probable protein phosphatase 2C 33, found in Oryza sativa subsp. japonica (Rice).